A 132-amino-acid chain; its full sequence is Succinate dehydrogenase cytochrome b560 subunit (132 aa).

2 consecutive transmembrane segments (helical) span residues 32 to 49 (LYLV…KFLF) and 59 to 81 (KFVK…FSMY). A heme-binding site is contributed by histidine 86. Residues 107-127 (VTMSTKLSLSLSLVLVLINCL) traverse the membrane as a helical segment.

This sequence belongs to the cytochrome b560 family. In terms of assembly, forms part of complex II containing four subunits: a 70 kDa flavoprotein (FP), a 27 kDa iron-sulfur protein (IP), a cytochrome B and a membrane-anchoring protein. Heme serves as cofactor.

Its subcellular location is the mitochondrion inner membrane. It participates in carbohydrate metabolism; tricarboxylic acid cycle. In terms of biological role, membrane-anchoring subunit of succinate dehydrogenase (SDH) that is involved in complex II of the mitochondrial electron transport chain and is responsible for transferring electrons from succinate to ubiquinone (coenzyme Q). The polypeptide is Succinate dehydrogenase cytochrome b560 subunit (SDH3) (Cyanidium caldarium (Red alga)).